The primary structure comprises 48 residues: Large ribosomal subunit protein eL40 (48 aa).

Belongs to the eukaryotic ribosomal protein eL40 family.

The polypeptide is Large ribosomal subunit protein eL40 (Methanobrevibacter smithii (strain ATCC 35061 / DSM 861 / OCM 144 / PS)).